We begin with the raw amino-acid sequence, 426 residues long: 5-methylthioadenosine/S-adenosylhomocysteine deaminase (426 aa).

2 residues coordinate Zn(2+): H60 and H62. E89 and H179 together coordinate substrate. Position 206 (H206) interacts with Zn(2+). Substrate-binding residues include E209 and D294. Zn(2+) is bound at residue D294.

It belongs to the metallo-dependent hydrolases superfamily. MTA/SAH deaminase family. Zn(2+) serves as cofactor.

It carries out the reaction S-adenosyl-L-homocysteine + H2O + H(+) = S-inosyl-L-homocysteine + NH4(+). The catalysed reaction is S-methyl-5'-thioadenosine + H2O + H(+) = S-methyl-5'-thioinosine + NH4(+). In terms of biological role, catalyzes the deamination of 5-methylthioadenosine and S-adenosyl-L-homocysteine into 5-methylthioinosine and S-inosyl-L-homocysteine, respectively. Is also able to deaminate adenosine. This chain is 5-methylthioadenosine/S-adenosylhomocysteine deaminase, found in Dictyoglomus thermophilum (strain ATCC 35947 / DSM 3960 / H-6-12).